Consider the following 180-residue polypeptide: Stathmin-3 (180 aa).

S-palmitoyl cysteine attachment occurs at residues Cys22 and Cys24. The SLD domain occupies 38–180; it reads GDMEVKQLDK…NKEQREEMSG (143 aa). Phosphoserine occurs at positions 50, 60, 65, 68, 72, 73, and 81. Positions 58-81 are disordered; the sequence is LKSPSDLSPESPVLSSPPKRKDAS. Over residues 60-74 the composition is skewed to low complexity; that stretch reads SPSDLSPESPVLSSP. The stretch at 75-179 forms a coiled coil; sequence PKRKDASLEE…RNKEQREEMS (105 aa).

Belongs to the stathmin family. In terms of assembly, interacts with STAT3. Interacts with CLU (secreted form); this interaction may act as an important modulator during neuronal differentiation. In terms of processing, N-terminal palmitoylation promotes specific anchoring to the cytosolic leaflet of Golgi membranes and subsequent vesicular trafficking along dendrites and axons. Neuronal Stathmins are substrates for palmitoyltransferases ZDHHC3, ZDHHC7 and ZDHHC15. Neuron specific.

It localises to the golgi apparatus. It is found in the cell projection. The protein resides in the growth cone. The protein localises to the axon. Its subcellular location is the cytoplasm. It localises to the cytosol. In terms of biological role, exhibits microtubule-destabilizing activity, which is antagonized by STAT3. The sequence is that of Stathmin-3 (Stmn3) from Rattus norvegicus (Rat).